The sequence spans 559 residues: MARTTSQLYDAVPIQSSVVLCSCPSPSMVRSQTEPGSSPGIPSGVSRQGSTMDGTTAEARPSTNPLQQHPAQLPPQPRKKRPEDFKFGKILGEGSFSTVVLARELATSREYAIKILEKRHIIKENKVPYVTRERDVMSRLDHPFFVKLYFTFQDDEKLYFGLSYAKNGELLKYIRKIGSFDETCTRFYTAEIVSALEYLHGKGIIHRDLKPENILLNEDMHIQITDFGTAKVLSPESKQARANSFVGTAQYVSPELLTEKSACKSSDLWALGCIIYQLVAGLPPFRAGNEYLIFQKIIKLEYHFPEKFFPKARDLVEKLLVLDATKRLGCEEMEGYGPLKAHPFFETITWENLHQQTPPKLTAYLPAMSEDDEDCYGNYDNLLSQFGFMQVSSSSSSHSLSTVETSLPQRSGSNIEQYIHDLDTNSFELDLQFSEDEKRLLLEKQAGGNPWHQFVENNLILKMGPVDKRKGLFARRRQLLLTEGPHLYYVDPVNKVLKGEIPWSQELRPEAKNFKTFFVHTPNRTYYLMDPSGNAHKWCRKIQEVWRQQYQSNPDAAVQ.

Tyr9 is modified (phosphotyrosine; by SRC and INSR). Ser25 is modified (phosphoserine). A disordered region spans residues 25–83 (SPSMVRSQTEPGSSPGIPSGVSRQGSTMDGTTAEARPSTNPLQQHPAQLPPQPRKKRPE). A compositionally biased stretch (low complexity) spans 35–44 (PGSSPGIPSG). Residues 45–54 (VSRQGSTMDG) are compositionally biased toward polar residues. Residues 85-345 (FKFGKILGEG…YGPLKAHPFF (261 aa)) enclose the Protein kinase domain. Residues 95-97 (SFS) and Lys114 contribute to the ATP site. The interval 116 to 160 (LEKRHIIKENKVPYVTRERDVMSRLDHPFFVKLYFTFQDDEKLYF) is PIF-pocket. ATP-binding positions include 163–165 (SYA) and Glu169. Asp208 (proton acceptor) is an active-site residue. ATP-binding residues include Glu212 and Asp226. The residue at position 244 (Ser244) is a Phosphoserine. Position 307 is an N6-acetyllysine (Lys307). Thr357 is subject to Phosphothreonine; by MELK. Phosphotyrosine; by SRC and INSR occurs at positions 376 and 379. Ser396 is subject to Phosphoserine. Position 397 is a phosphoserine; by MAP3K5 (Ser397). Ser399 is modified (phosphoserine). Ser401 is subject to Phosphoserine; by MAP3K5. Phosphoserine is present on Ser413. The PH domain maps to 462 to 553 (KMGPVDKRKG…EVWRQQYQSN (92 aa)). Phosphoserine; by PKC/PRKCQ is present on Ser504. Thr516 is modified (phosphothreonine; by autocatalysis). The residue at position 532 (Ser532) is a Phosphoserine; by PKC/PRKCQ.

It belongs to the protein kinase superfamily. AGC Ser/Thr protein kinase family. PDPK1 subfamily. Homodimer in its autoinhibited state. Active as monomer. Interacts with NPRL2, PAK1, PTK2B, GRB14, STRAP and IKKB. The Tyr-9 phosphorylated form interacts with SRC, RASA1 and CRK (via their SH2 domains). Interacts with SGK3 in a phosphorylation-dependent manner. The tyrosine-phosphorylated form interacts with PTPN6. The Ser-244 phosphorylated form interacts with YWHAH and YWHAQ. Binds INSR in response to insulin. Interacts (via PH domain) with SMAD3, SMAD4 and SMAD7. Interacts with PKN2; the interaction stimulates PDPK1 autophosphorylation, its PI(3,4,5)P3-dependent kinase activity toward 'Ser-473' of AKT1 but also activates its kinase activity toward PRKCD and PRKCZ. Interacts with PKN1 (via C-terminus) and PPARG. Phosphorylation on Ser-244 in the activation loop is required for full activity. PDPK1 itself can autophosphorylate Ser-244, leading to its own activation. Autophosphorylation is inhibited by the apoptotic C-terminus cleavage product of PKN2. Tyr-9 phosphorylation is critical for stabilization of both PDPK1 and the PDPK1/SRC complex via HSP90-mediated protection of PDPK1 degradation. Angiotensin II stimulates the tyrosine phosphorylation of PDPK1 in vascular smooth muscle in a calcium- and SRC-dependent manner. Phosphorylated on Tyr-9, Tyr-376 and Tyr-379 by INSR in response to insulin. Palmitate negatively regulates autophosphorylation at Ser-244 and palmitate-induced phosphorylation at Ser-532 and Ser-504 by PKC/PRKCQ negatively regulates its ability to phosphorylate PKB/AKT1. Phosphorylation at Thr-357 by MELK partially inhibits kinase activity, the inhibition is cooperatively enhanced by phosphorylation at Ser-397 and Ser-401 by MAP3K5. Post-translationally, monoubiquitinated in the kinase domain, deubiquitinated by USP4. Highly expressed in heart, brain, liver and testis, also expressed in embryonic cells.

The protein resides in the cytoplasm. The protein localises to the nucleus. It is found in the cell membrane. Its subcellular location is the cell junction. It localises to the focal adhesion. The catalysed reaction is L-seryl-[protein] + ATP = O-phospho-L-seryl-[protein] + ADP + H(+). The enzyme catalyses L-threonyl-[protein] + ATP = O-phospho-L-threonyl-[protein] + ADP + H(+). With respect to regulation, homodimerization regulates its activity by maintaining the kinase in an autoinhibitory conformation. NPRL2 down-regulates its activity by interfering with tyrosine phosphorylation at the Tyr-9, Tyr-376 and Tyr-379 residues. The 14-3-3 protein YWHAQ acts as a negative regulator by association with the residues surrounding the Ser-244 residue. STRAP positively regulates its activity by enhancing its autophosphorylation and by stimulating its dissociation from YWHAQ. SMAD2, SMAD3, SMAD4 and SMAD7 also positively regulate its activity by stimulating its dissociation from YWHAQ. Activated by phosphorylation on Tyr-9, Tyr-376 and Tyr-379 by INSR in response to insulin. Its function is as follows. Serine/threonine kinase which acts as a master kinase, phosphorylating and activating a subgroup of the AGC family of protein kinases. Its targets include: protein kinase B (PKB/AKT1, PKB/AKT2, PKB/AKT3), p70 ribosomal protein S6 kinase (RPS6KB1), p90 ribosomal protein S6 kinase (RPS6KA1, RPS6KA2 and RPS6KA3), cyclic AMP-dependent protein kinase (PRKACA), protein kinase C (PRKCD and PRKCZ), serum and glucocorticoid-inducible kinase (SGK1, SGK2 and SGK3), p21-activated kinase-1 (PAK1), TSSK3, protein kinase PKN (PKN1 and PKN2). Plays a central role in the transduction of signals from insulin by providing the activating phosphorylation to PKB/AKT1, thus propagating the signal to downstream targets controlling cell proliferation and survival, as well as glucose and amino acid uptake and storage. Negatively regulates the TGF-beta-induced signaling by: modulating the association of SMAD3 and SMAD7 with TGF-beta receptor, phosphorylating SMAD2, SMAD3, SMAD4 and SMAD7, preventing the nuclear translocation of SMAD3 and SMAD4 and the translocation of SMAD7 from the nucleus to the cytoplasm in response to TGF-beta. Activates PPARG transcriptional activity and promotes adipocyte differentiation. Activates the NF-kappa-B pathway via phosphorylation of IKKB. The tyrosine phosphorylated form is crucial for the regulation of focal adhesions by angiotensin II. Controls proliferation, survival, and growth of developing pancreatic cells. Participates in the regulation of Ca(2+) entry and Ca(2+)-activated K(+) channels of mast cells. Essential for the motility of vascular endothelial cells (ECs) and is involved in the regulation of their chemotaxis. Plays a critical role in cardiac homeostasis by serving as a dual effector for cell survival and beta-adrenergic response. Plays an important role during thymocyte development by regulating the expression of key nutrient receptors on the surface of pre-T cells and mediating Notch-induced cell growth and proliferative responses. Provides negative feedback inhibition to toll-like receptor-mediated NF-kappa-B activation in macrophages. This Mus musculus (Mouse) protein is 3-phosphoinositide-dependent protein kinase 1 (Pdpk1).